We begin with the raw amino-acid sequence, 23 residues long: Cysteine-rich venom protein 24 (23 aa).

The segment at 1-23 is disordered; the sequence is VDFASESXNKRENQQIVDKHNAL. The segment covering 8-23 has biased composition (basic and acidic residues); sequence XNKRENQQIVDKHNAL.

This sequence belongs to the CRISP family. In terms of processing, contains 8 disulfide bonds. In terms of tissue distribution, expressed by the venom gland.

The protein resides in the secreted. The sequence is that of Cysteine-rich venom protein 24 from Naja kaouthia (Monocled cobra).